We begin with the raw amino-acid sequence, 232 residues long: Ion-translocating oxidoreductase complex subunit E (232 aa).

A run of 6 helical transmembrane segments spans residues 12–31, 39–59, 69–89, 92–112, 125–145, and 182–202; these read LWRN…LLAV, LGLG…VSAL, IPIY…LINA, FGLY…CIVI, ALAA…LLLL, and PFLL…MLVG.

The protein belongs to the NqrDE/RnfAE family. In terms of assembly, the complex is composed of six subunits: RnfA, RnfB, RnfC, RnfD, RnfE and RnfG.

Its subcellular location is the cell inner membrane. In terms of biological role, part of a membrane-bound complex that couples electron transfer with translocation of ions across the membrane. The chain is Ion-translocating oxidoreductase complex subunit E from Sodalis glossinidius (strain morsitans).